The chain runs to 490 residues: Aspartyl/glutamyl-tRNA(Asn/Gln) amidotransferase subunit B (490 aa).

It belongs to the GatB/GatE family. GatB subfamily. In terms of assembly, heterotrimer of A, B and C subunits.

The enzyme catalyses L-glutamyl-tRNA(Gln) + L-glutamine + ATP + H2O = L-glutaminyl-tRNA(Gln) + L-glutamate + ADP + phosphate + H(+). The catalysed reaction is L-aspartyl-tRNA(Asn) + L-glutamine + ATP + H2O = L-asparaginyl-tRNA(Asn) + L-glutamate + ADP + phosphate + 2 H(+). In terms of biological role, allows the formation of correctly charged Asn-tRNA(Asn) or Gln-tRNA(Gln) through the transamidation of misacylated Asp-tRNA(Asn) or Glu-tRNA(Gln) in organisms which lack either or both of asparaginyl-tRNA or glutaminyl-tRNA synthetases. The reaction takes place in the presence of glutamine and ATP through an activated phospho-Asp-tRNA(Asn) or phospho-Glu-tRNA(Gln). The sequence is that of Aspartyl/glutamyl-tRNA(Asn/Gln) amidotransferase subunit B from Prochlorococcus marinus (strain AS9601).